We begin with the raw amino-acid sequence, 366 residues long: UDP-N-acetylglucosamine--N-acetylmuramyl-(pentapeptide) pyrophosphoryl-undecaprenol N-acetylglucosamine transferase (366 aa).

Residues 15-17 (TGG), Asn127, Arg175, Ser201, Ile255, and Gln300 each bind UDP-N-acetyl-alpha-D-glucosamine.

This sequence belongs to the glycosyltransferase 28 family. MurG subfamily.

It localises to the cell inner membrane. The catalysed reaction is di-trans,octa-cis-undecaprenyl diphospho-N-acetyl-alpha-D-muramoyl-L-alanyl-D-glutamyl-meso-2,6-diaminopimeloyl-D-alanyl-D-alanine + UDP-N-acetyl-alpha-D-glucosamine = di-trans,octa-cis-undecaprenyl diphospho-[N-acetyl-alpha-D-glucosaminyl-(1-&gt;4)]-N-acetyl-alpha-D-muramoyl-L-alanyl-D-glutamyl-meso-2,6-diaminopimeloyl-D-alanyl-D-alanine + UDP + H(+). Its pathway is cell wall biogenesis; peptidoglycan biosynthesis. Functionally, cell wall formation. Catalyzes the transfer of a GlcNAc subunit on undecaprenyl-pyrophosphoryl-MurNAc-pentapeptide (lipid intermediate I) to form undecaprenyl-pyrophosphoryl-MurNAc-(pentapeptide)GlcNAc (lipid intermediate II). In Thiobacillus denitrificans (strain ATCC 25259 / T1), this protein is UDP-N-acetylglucosamine--N-acetylmuramyl-(pentapeptide) pyrophosphoryl-undecaprenol N-acetylglucosamine transferase.